A 310-amino-acid polypeptide reads, in one-letter code: Delta(1)-pyrroline-2-carboxylate reductase 1 (310 aa).

Belongs to the ornithine cyclodeaminase/mu-crystallin family.

It carries out the reaction L-proline + NAD(+) = 1-pyrroline-2-carboxylate + NADH + H(+). The catalysed reaction is L-proline + NADP(+) = 1-pyrroline-2-carboxylate + NADPH + H(+). Catalyzes the reduction of Delta(1)-pyrroline-2-carboxylate (Pyr2C) to L-proline, using NADPH as the electron donor. May be involved in a degradation pathway that converts trans-3-hydroxy-L-proline (t3LHyp) to L-proline. This chain is Delta(1)-pyrroline-2-carboxylate reductase 1, found in Burkholderia multivorans (strain ATCC 17616 / 249).